The primary structure comprises 71 residues: Disintegrin tzabcanin (71 aa).

The Disintegrin domain maps to 1 to 71 (GEECDCGSPA…ADCPRNHFHA (71 aa)). 6 disulfides stabilise this stretch: cysteine 4-cysteine 19, cysteine 6-cysteine 14, cysteine 13-cysteine 36, cysteine 27-cysteine 33, cysteine 32-cysteine 57, and cysteine 45-cysteine 64. Residues 49-51 (RGD) carry the Cell attachment site motif.

The protein belongs to the venom metalloproteinase (M12B) family. P-II subfamily. P-IIa sub-subfamily. As to expression, expressed by the venom gland.

Its subcellular location is the secreted. Its function is as follows. Inhibits fibrinogen interaction with platelets. Acts by binding to alpha-IIb/beta-3 (ITGA2B/ITGB3) on the platelet surface and inhibits aggregation induced by ADP, thrombin, platelet-activating factor and collagen. Inhibits cell adhesion to vitronectin, probably by blocking its receptor integrin alpha-V/beta-3 (ITGAV/ITGB3), and to fibronectin in vitro. Shows little to no cytotoxicity in vitro. The chain is Disintegrin tzabcanin from Crotalus tzabcan (Yucatan neotropical rattlesnake).